A 314-amino-acid chain; its full sequence is Aspartate carbamoyltransferase catalytic subunit (314 aa).

Carbamoyl phosphate-binding residues include Arg-55 and Thr-56. Lys-83 is a binding site for L-aspartate. Carbamoyl phosphate is bound by residues Arg-105, His-134, and Gln-137. Positions 167 and 221 each coordinate L-aspartate. Carbamoyl phosphate is bound by residues Gly-262 and Pro-263.

This sequence belongs to the aspartate/ornithine carbamoyltransferase superfamily. ATCase family. As to quaternary structure, heterododecamer (2C3:3R2) of six catalytic PyrB chains organized as two trimers (C3), and six regulatory PyrI chains organized as three dimers (R2).

The catalysed reaction is carbamoyl phosphate + L-aspartate = N-carbamoyl-L-aspartate + phosphate + H(+). It functions in the pathway pyrimidine metabolism; UMP biosynthesis via de novo pathway; (S)-dihydroorotate from bicarbonate: step 2/3. Its function is as follows. Catalyzes the condensation of carbamoyl phosphate and aspartate to form carbamoyl aspartate and inorganic phosphate, the committed step in the de novo pyrimidine nucleotide biosynthesis pathway. The chain is Aspartate carbamoyltransferase catalytic subunit from Corynebacterium urealyticum (strain ATCC 43042 / DSM 7109).